The sequence spans 1207 residues: DNA-directed RNA polymerase subunit beta' (1207 aa).

Zn(2+)-binding residues include C60, C62, C75, and C78. Mg(2+)-binding residues include D450, D452, and D454. C818, C892, C899, and C902 together coordinate Zn(2+).

Belongs to the RNA polymerase beta' chain family. The RNAP catalytic core consists of 2 alpha, 1 beta, 1 beta' and 1 omega subunit. When a sigma factor is associated with the core the holoenzyme is formed, which can initiate transcription. Requires Mg(2+) as cofactor. Zn(2+) serves as cofactor.

It carries out the reaction RNA(n) + a ribonucleoside 5'-triphosphate = RNA(n+1) + diphosphate. Its function is as follows. DNA-dependent RNA polymerase catalyzes the transcription of DNA into RNA using the four ribonucleoside triphosphates as substrates. In Lactococcus lactis subsp. lactis (strain IL1403) (Streptococcus lactis), this protein is DNA-directed RNA polymerase subunit beta'.